A 196-amino-acid polypeptide reads, in one-letter code: ATP-dependent Clp protease proteolytic subunit (196 aa).

Ser101 (nucleophile) is an active-site residue. His126 is a catalytic residue.

It belongs to the peptidase S14 family. Component of the chloroplastic Clp protease core complex.

It is found in the plastid. The protein localises to the chloroplast stroma. It catalyses the reaction Hydrolysis of proteins to small peptides in the presence of ATP and magnesium. alpha-casein is the usual test substrate. In the absence of ATP, only oligopeptides shorter than five residues are hydrolyzed (such as succinyl-Leu-Tyr-|-NHMec, and Leu-Tyr-Leu-|-Tyr-Trp, in which cleavage of the -Tyr-|-Leu- and -Tyr-|-Trp bonds also occurs).. Functionally, cleaves peptides in various proteins in a process that requires ATP hydrolysis. Has a chymotrypsin-like activity. Plays a major role in the degradation of misfolded proteins. The protein is ATP-dependent Clp protease proteolytic subunit of Helianthus annuus (Common sunflower).